Reading from the N-terminus, the 785-residue chain is Disintegrin and metalloproteinase domain-containing protein B (785 aa).

The signal sequence occupies residues 1-26 (MRFLKSALPFVASALSLLSVQAAARS). The Extracellular segment spans residues 27-703 (QEPSAIQHVS…GSWVEQHKNL (677 aa)). Residues 279 to 507 (KQVALVGIAA…NSVKSSCLSD (229 aa)) form the Peptidase M12B domain. N-linked (GlcNAc...) asparagine glycans are attached at residues Asn322, Asn329, and Asn355. Intrachain disulfides connect Cys398–Cys492 and Cys446–Cys464. Position 429 (His429) interacts with Zn(2+). Glu430 is a catalytic residue. Zn(2+) contacts are provided by His433 and His439. The Disintegrin domain occupies 516 to 605 (GSQCGNGIVE…TCPADSFKKD (90 aa)). N-linked (GlcNAc...) asparagine glycosylation is found at Asn561, Asn593, and Asn640. An intrachain disulfide couples Cys577 to Cys597. A helical transmembrane segment spans residues 704–724 (VIGVACGVGGLLVLSILWCMI). Topologically, residues 725–785 (NRCRRARTVV…GPYQSATRYA (61 aa)) are cytoplasmic. The tract at residues 737–785 (PPMRPWPGPMPPPPPQMGQWAGPNRGYQGLRAEPPPPYPGPYQSATRYA) is disordered. The segment covering 739 to 752 (MRPWPGPMPPPPPQ) has biased composition (pro residues).

Zn(2+) serves as cofactor.

Its subcellular location is the membrane. Functionally, probable zinc protease. The sequence is that of Disintegrin and metalloproteinase domain-containing protein B (ADM-B) from Aspergillus fumigatus (strain ATCC MYA-4609 / CBS 101355 / FGSC A1100 / Af293) (Neosartorya fumigata).